Consider the following 166-residue polypeptide: Phospholipase A2 inhibitor (166 aa).

The first 19 residues, 1–19 (MRLILLSGLLLLGIFLANG), serve as a signal peptide directing secretion. In terms of domain architecture, C-type lectin spans 46–161 (LKGSFLIVHK…CDDNLLVVCE (116 aa)). Intrachain disulfides connect Cys-83/Cys-160 and Cys-138/Cys-152. The N-linked (GlcNAc...) asparagine glycan is linked to Asn-122.

It belongs to the alpha-type phospholipase A2 inhibitor family. As to quaternary structure, homotrimer; non-covalently linked. In terms of tissue distribution, expressed by the liver.

Its subcellular location is the secreted. This phospholipase A2 inhibitor binds directly phospholipase A2 in the presence or absence of calcium. The polypeptide is Phospholipase A2 inhibitor (Bothrops jararacussu (Jararacussu)).